A 172-amino-acid polypeptide reads, in one-letter code: Diphosphoinositol polyphosphate phosphohydrolase 1 (172 aa).

At Met-1 the chain carries N-acetylmethionine. Substrate is bound by residues Arg-10, Lys-18–Arg-20, and Ser-39–Arg-41. The region spanning Tyr-17–Thr-142 is the Nudix hydrolase domain. Residues Gly-50 and Glu-66 each coordinate Mg(2+). Positions Gly-51–Gly-72 match the Nudix box motif. Glu-69 serves as the catalytic Proton acceptor. Glu-70 contacts Mg(2+). Substrate contacts are provided by residues Arg-89–His-91, Arg-115, and Lys-133.

Belongs to the Nudix hydrolase family. DIPP subfamily. Monomer. It depends on Mg(2+) as a cofactor. Mn(2+) is required as a cofactor. The cofactor is Zn(2+). In terms of tissue distribution, widely expressed. Expressed at higher level in brain, heart, pancreas and liver. Also expressed in placenta, lung and kidney.

The protein localises to the cytoplasm. It is found in the nucleus. It catalyses the reaction diphospho-myo-inositol polyphosphate + H2O = myo-inositol polyphosphate + phosphate.. It carries out the reaction 5-diphospho-1D-myo-inositol 1,2,3,4,6-pentakisphosphate + H2O = 1D-myo-inositol hexakisphosphate + phosphate + H(+). The catalysed reaction is 3,5-bis(diphospho)-1D-myo-inositol 1,2,4,6-tetrakisphosphate + H2O = 3-diphospho-1D-myo-inositol 1,2,4,5,6-pentakisphosphate + phosphate + 2 H(+). The enzyme catalyses [phosphate](n+1) + n H2O = (n+1) phosphate + n H(+). It catalyses the reaction P(1),P(5)-bis(5'-adenosyl) pentaphosphate + H2O = ADP + ATP + 2 H(+). It carries out the reaction P(1),P(6)-bis(5'-adenosyl) hexaphosphate + H2O = 2 ATP + 2 H(+). The catalysed reaction is P(1),P(4)-bis(5'-adenosyl) tetraphosphate + H2O = AMP + ATP + 2 H(+). The enzyme catalyses a 5'-end (N(7)-methyl 5'-triphosphoguanosine)-ribonucleoside in mRNA + H2O = N(7)-methyl-GMP + a 5'-end diphospho-ribonucleoside in mRNA + 2 H(+). It catalyses the reaction a 5'-end (N(7)-methyl 5'-triphosphoguanosine)-ribonucleoside in mRNA + H2O = N(7)-methyl-GDP + a 5'-end phospho-ribonucleoside in mRNA + 2 H(+). With respect to regulation, endopolyphospahatase activity is inhibited by NaF, NaPPi, beta-glycerol phosphate and heparin. 5-diphosphoinositol pentakisphosphate (5-InsP7) inhibits its mRNA decapping activity. In terms of biological role, cleaves a beta-phosphate from the diphosphate groups in PP-InsP5 (diphosphoinositol pentakisphosphate) and [PP]2-InsP4 (bisdiphosphoinositol tetrakisphosphate), suggesting that it may play a role in signal transduction. InsP6 (inositol hexakisphosphate) is not a substrate. Acts as a negative regulator of the ERK1/2 pathway. Also able to catalyze the hydrolysis of dinucleoside oligophosphates, with diadenosine 5',5'''-P1,P6-hexaphosphate (Ap6A) and diadenosine 5',5'''- P1,P5-pentaphosphate (Ap5A) being the preferred substrates. The major reaction products are ADP and p4a from Ap6A and ADP and ATP from Ap5A. Also able to hydrolyze 5-phosphoribose 1-diphosphate. Acts as a decapping enzyme that modulates the stability of a subset of mRNAs implicated in cell motility. Hydrolyzes monomethylated capped RNA after both the alpha- and beta-phosphates generating m7GMP + ppRNA and m7GDP + pRNA. Can hydrolyze unmethylated capped RNAs. Divalent cations zinc, magnesium and manganese determine its substrate specificity. Exhibits diphosphoinositol polyphosphate phosphohydrolase in the presence of magnesium ions, diadenosine hexaphosphate hydrolase activity in the presence of manganese ions and endopolyphosphatase activity in the presence of zinc ions. Plays an important role in limiting DNA damage and maintaining cell survival upon oxidative stress via its endopolyphosphatase activity. This chain is Diphosphoinositol polyphosphate phosphohydrolase 1, found in Homo sapiens (Human).